We begin with the raw amino-acid sequence, 200 residues long: Small ribosomal subunit protein uS4 (200 aa).

Positions 91-150 constitute an S4 RNA-binding domain; that stretch reads TRLDNVVYRLGITPTRRSARQLVSHKHITVNGKIVNIPSYALKVGDIIGLTEKTKSSNAI.

It belongs to the universal ribosomal protein uS4 family. As to quaternary structure, part of the 30S ribosomal subunit. Contacts protein S5. The interaction surface between S4 and S5 is involved in control of translational fidelity.

In terms of biological role, one of the primary rRNA binding proteins, it binds directly to 16S rRNA where it nucleates assembly of the body of the 30S subunit. With S5 and S12 plays an important role in translational accuracy. The polypeptide is Small ribosomal subunit protein uS4 (Amoebophilus asiaticus (strain 5a2)).